A 170-amino-acid chain; its full sequence is NAD(P)H-quinone oxidoreductase subunit I, chloroplastic (170 aa).

2 consecutive 4Fe-4S ferredoxin-type domains span residues 55–84 and 95–124; these read GRIH…VDWK and LNYS…MTEE. The [4Fe-4S] cluster site is built by cysteine 64, cysteine 67, cysteine 70, cysteine 74, cysteine 104, cysteine 107, cysteine 110, and cysteine 114.

Belongs to the complex I 23 kDa subunit family. As to quaternary structure, NDH is composed of at least 16 different subunits, 5 of which are encoded in the nucleus. It depends on [4Fe-4S] cluster as a cofactor.

It localises to the plastid. It is found in the chloroplast thylakoid membrane. It carries out the reaction a plastoquinone + NADH + (n+1) H(+)(in) = a plastoquinol + NAD(+) + n H(+)(out). The catalysed reaction is a plastoquinone + NADPH + (n+1) H(+)(in) = a plastoquinol + NADP(+) + n H(+)(out). Its function is as follows. NDH shuttles electrons from NAD(P)H:plastoquinone, via FMN and iron-sulfur (Fe-S) centers, to quinones in the photosynthetic chain and possibly in a chloroplast respiratory chain. The immediate electron acceptor for the enzyme in this species is believed to be plastoquinone. Couples the redox reaction to proton translocation, and thus conserves the redox energy in a proton gradient. The polypeptide is NAD(P)H-quinone oxidoreductase subunit I, chloroplastic (Spinacia oleracea (Spinach)).